A 220-amino-acid chain; its full sequence is Peptide methionine sulfoxide reductase MsrA (220 aa).

The active site involves Cys52.

Belongs to the MsrA Met sulfoxide reductase family.

The catalysed reaction is L-methionyl-[protein] + [thioredoxin]-disulfide + H2O = L-methionyl-(S)-S-oxide-[protein] + [thioredoxin]-dithiol. The enzyme catalyses [thioredoxin]-disulfide + L-methionine + H2O = L-methionine (S)-S-oxide + [thioredoxin]-dithiol. Its function is as follows. Has an important function as a repair enzyme for proteins that have been inactivated by oxidation. Catalyzes the reversible oxidation-reduction of methionine sulfoxide in proteins to methionine. The sequence is that of Peptide methionine sulfoxide reductase MsrA from Corynebacterium diphtheriae (strain ATCC 700971 / NCTC 13129 / Biotype gravis).